The chain runs to 25 residues: Xenoposin precursor fragment BM3 (25 aa).

As to expression, expressed by the skin glands.

It is found in the secreted. Its function is as follows. Antimicrobial peptide. In Xenopus boumbaensis (Mawa clawed frog), this protein is Xenoposin precursor fragment BM3.